Here is a 162-residue protein sequence, read N- to C-terminus: V-type proton ATPase subunit c' (162 aa).

Topologically, residues methionine 1–serine 11 are lumenal. The chain crosses the membrane as a helical span at residues phenylalanine 12–glycine 32. Residues threonine 33–serine 54 lie on the Cytoplasmic side of the membrane. The chain crosses the membrane as a helical span at residues leucine 55–isoleucine 75. Topologically, residues alanine 76 to histidine 93 are lumenal. A helical membrane pass occupies residues leucine 94–valine 114. Residues glycine 115–methionine 132 lie on the Cytoplasmic side of the membrane. The helical transmembrane segment at valine 133 to leucine 153 threads the bilayer. The Lumenal portion of the chain corresponds to glutamine 154–tyrosine 162.

This sequence belongs to the V-ATPase proteolipid subunit family. V-ATPase is a heteromultimeric enzyme composed of a peripheral catalytic V1 complex (components A to H) attached to an integral membrane V0 proton pore complex (components: a, c, c', c'', d, e, f and VOA1). The decameric c-ring forms the proton-conducting pore, and is composed of eight proteolipid subunits c, one subunit c' and one subunit c''.

It is found in the vacuole membrane. Proton-conducting pore forming subunit of the V0 complex of vacuolar(H+)-ATPase (V-ATPase), a multisubunit enzyme composed of a peripheral complex (V1) that hydrolyzes ATP and a membrane integral complex (V0) that translocates protons. V-ATPase is responsible for acidifying and maintaining the pH of intracellular compartments. The chain is V-type proton ATPase subunit c' from Schizosaccharomyces pombe (strain 972 / ATCC 24843) (Fission yeast).